Consider the following 445-residue polypeptide: 3-phosphoshikimate 1-carboxyvinyltransferase (445 aa).

3-phosphoshikimate-binding residues include Lys28, Ser29, and Arg33. Residue Lys28 participates in phosphoenolpyruvate binding. Positions 101 and 129 each coordinate phosphoenolpyruvate. Residues Ser175, Gln177, Asp328, and Lys355 each coordinate 3-phosphoshikimate. Gln177 is a binding site for phosphoenolpyruvate. Asp328 acts as the Proton acceptor in catalysis. Residues Arg359 and Arg402 each contribute to the phosphoenolpyruvate site.

This sequence belongs to the EPSP synthase family. In terms of assembly, monomer.

It is found in the cytoplasm. It catalyses the reaction 3-phosphoshikimate + phosphoenolpyruvate = 5-O-(1-carboxyvinyl)-3-phosphoshikimate + phosphate. It participates in metabolic intermediate biosynthesis; chorismate biosynthesis; chorismate from D-erythrose 4-phosphate and phosphoenolpyruvate: step 6/7. Functionally, catalyzes the transfer of the enolpyruvyl moiety of phosphoenolpyruvate (PEP) to the 5-hydroxyl of shikimate-3-phosphate (S3P) to produce enolpyruvyl shikimate-3-phosphate and inorganic phosphate. This chain is 3-phosphoshikimate 1-carboxyvinyltransferase, found in Bradyrhizobium sp. (strain BTAi1 / ATCC BAA-1182).